Here is a 176-residue protein sequence, read N- to C-terminus: Membrane glycoprotein UL144 (176 aa).

The first 20 residues, 1–20 (MKPLIMLICFAVILLQLGVT), serve as a signal peptide directing secretion. 2 TNFR-Cys repeats span residues 22–56 (VCQHNEVQLGNECCPPCGSGQRVTKVCTDYTSVTC) and 58–95 (PCPNGTYVSGLYNCTDCTQCNVTQVMIRNCTSTNNTVC). Intrachain disulfides connect Cys-23/Cys-34, Cys-35/Cys-48, Cys-38/Cys-56, Cys-59/Cys-71, Cys-74/Cys-87, and Cys-77/Cys-95. Residues 134 to 154 (LAWLSLFIFLVGIILLILYLI) traverse the membrane as a helical segment.

Interacts with host TRIM23; this interaction causes auto-ubiquitination of TRAF6, leading to NF-kappaB activation.

The protein resides in the membrane. Functionally, activates NF-kappaB in a tumor necrosis factor receptor (TNFR)-associated factor 6 (TRAF6)-dependent manner, causing the up-regulation of the chemokine CCL22. This is Membrane glycoprotein UL144 (UL144) from Homo sapiens (Human).